A 51-amino-acid chain; its full sequence is Large ribosomal subunit protein eL39z (51 aa).

Belongs to the eukaryotic ribosomal protein eL39 family.

The protein is Large ribosomal subunit protein eL39z (RPL39A) of Oryza sativa subsp. japonica (Rice).